We begin with the raw amino-acid sequence, 388 residues long: Methylthioribose-1-phosphate isomerase (388 aa).

The Proton donor role is filled by aspartate 258.

It belongs to the eIF-2B alpha/beta/delta subunits family. MtnA subfamily.

The protein resides in the cytoplasm. The protein localises to the nucleus. It catalyses the reaction 5-(methylsulfanyl)-alpha-D-ribose 1-phosphate = 5-(methylsulfanyl)-D-ribulose 1-phosphate. It functions in the pathway amino-acid biosynthesis; L-methionine biosynthesis via salvage pathway; L-methionine from S-methyl-5-thio-alpha-D-ribose 1-phosphate: step 1/6. Catalyzes the interconversion of methylthioribose-1-phosphate (MTR-1-P) into methylthioribulose-1-phosphate (MTRu-1-P). This Neurospora crassa (strain ATCC 24698 / 74-OR23-1A / CBS 708.71 / DSM 1257 / FGSC 987) protein is Methylthioribose-1-phosphate isomerase (mri-1).